The primary structure comprises 341 residues: CD2 antigen cytoplasmic tail-binding protein 2 (341 aa).

The interval 1-66 (MPKRKVTFQG…DGGSSKYDIL (66 aa)) is disordered. Lys-26 is covalently cross-linked (Glycyl lysine isopeptide (Lys-Gly) (interchain with G-Cter in SUMO2)). Lys-44 carries the post-translational modification N6-acetyllysine. A phosphoserine mark is found at Ser-46, Ser-49, and Ser-118. Positions 49–58 (SDEEEDDDDG) are enriched in acidic residues. Disordered stretches follow at residues 131–151 (RPPG…GQTS) and 178–199 (LGAR…PQRL). 2 positions are modified to phosphoserine: Ser-194 and Ser-195. The region spanning 280-338 (DVMWEYKWENTGDAELYGPFTSAQMQTWVSEGYFPDGVYCRKLDPPGGQFYNSKRIDFD) is the GYF domain.

In terms of assembly, component of the U5 snRNP complex composed of the U5 snRNA and at least PRPF6, PRPF8, SNRNP200, EFTUD2, SNRNP40, DDX23, TXNL4A and CD2BP2. Interacts directly with TXNL4A and PRPF6. Interacts (via GYF domain) with CD2 (via Pro-rich sequence in the cytoplasmic domain). Interacts with PQBP1.

The protein localises to the cytoplasm. It localises to the nucleus. In terms of biological role, involved in pre-mRNA splicing as component of the U5 snRNP complex that is involved in spliceosome assembly. The chain is CD2 antigen cytoplasmic tail-binding protein 2 (CD2BP2) from Homo sapiens (Human).